The sequence spans 631 residues: FAST kinase domain-containing protein 4 (631 aa).

The N-terminal 107 residues, 1–107 (MAAHLVKRCT…NQAAMVLIRL (107 aa)), are a transit peptide targeting the mitochondrion. Serine 553 bears the Phosphoserine mark. An RAP domain is found at 561-619 (LAFLRWEFPNFNSRSKDLLGRFVLARRHIVAAGFLIVDVPFYEWLELKSEWQKGAYLKD).

It belongs to the FAST kinase family. As to expression, ubiquitously expressed. Expression detected in spleen, thymus, testis, ovary, colon, heart, smooth muscle, kidney, brain, lung, liver and white adipose tissue with highest expression in smooth muscle.

The protein resides in the mitochondrion matrix. In terms of biological role, plays a role in processing of mitochondrial RNA precursors and in stabilization of a subset of mature mitochondrial RNA species, such as MT-CO1, MT-CO2, MT-CYB, MT-CO3, MT-ND3, MT-ND5 and MT-ATP8/6. May play a role in cell cycle progression. The protein is FAST kinase domain-containing protein 4 of Homo sapiens (Human).